An 88-amino-acid chain; its full sequence is Small ribosomal subunit protein bS16 (88 aa).

The protein belongs to the bacterial ribosomal protein bS16 family.

The sequence is that of Small ribosomal subunit protein bS16 from Leptospira interrogans serogroup Icterohaemorrhagiae serovar Lai (strain 56601).